The following is a 202-amino-acid chain: Oligoribonuclease (202 aa).

In terms of domain architecture, Exonuclease spans 2–166 (LVWIDCEMTG…ADIQESIEEL (165 aa)). Tyr-123 is an active-site residue.

It belongs to the oligoribonuclease family.

It localises to the cytoplasm. In terms of biological role, 3'-to-5' exoribonuclease specific for small oligoribonucleotides. This chain is Oligoribonuclease, found in Cutibacterium acnes (strain DSM 16379 / KPA171202) (Propionibacterium acnes).